Consider the following 232-residue polypeptide: MGVGKSKLDKCPLSWHKKDSVDADQDGHESDSKNSEEACLRGFVEQSSGSEPPTGEQDQPEAKGAGPEEQDEEEFLKFVILHAEDDTDEALRVQDLLQNDFGIRPGIVFAEMPCGRLHLQNLDDAVNGSAWTILLLTENFLRDTWCNFQFYTSLMNSVSRQHKYNSVIPMRPLNSPLPRERTPLALQTINALEEESQGFSTQVERIFRESVFERQQSIWKETRSVSQKQFIA.

A compositionally biased stretch (basic and acidic residues) spans 1-39; sequence MGVGKSKLDKCPLSWHKKDSVDADQDGHESDSKNSEEAC. A disordered region spans residues 1 to 70; that stretch reads MGVGKSKLDK…EAKGAGPEEQ (70 aa). The N-myristoyl glycine moiety is linked to residue Gly-2. One can recognise a TIR domain in the interval 74–226; it reads EFLKFVILHA…SIWKETRSVS (153 aa). Position 164 is a phosphotyrosine (Tyr-164).

In terms of assembly, homodimer. Interacts with TLR4, TICAM1, IRF3 and IRF7 in response to LPS. Interacts with IL1R1, IL1RAP, IRAK2, IRAK3 and TRAF6. Interacts with protein kinase-inactive mutants of IRAK1 and IRAK4. Isoform 1 interacts with isoform 2; the interaction occurs in late endosomes and disrupts the interaction between isoform 1 and TICAM1. Interacts with MYD88; the interaction decreases after IL-18 stimulation in a time-dependent manner. Interacts with IL18R1 and IL18RAP. Interacts with TLR2. Interacts with RAB11FIP2. Post-translationally, myristoylated. Required for membrane association which is critical for its ability to initiate efficient signaling. Phosphorylated by PRKCE in response to LPS. Phosphorylation is essential for its function. It is depleted from the membrane upon phosphorylation. Tyrosine phosphorylation is inhibited by phosphatase PTPN4.

It is found in the cytoplasm. It localises to the golgi apparatus. The protein resides in the cell membrane. Its subcellular location is the early endosome. The protein localises to the late endosome. It is found in the endoplasmic reticulum. It localises to the cell projection. The protein resides in the phagocytic cup. In terms of biological role, functions as a sorting adapter in different signaling pathways to facilitate downstream signaling leading to type I interferon induction. In TLR4 signaling, physically bridges TLR4 and TICAM1 and functionally transmits signal to TICAM1 in early endosomes after endocytosis of TLR4. In TLR2 signaling, physically bridges TLR2 and MYD88 and is required for the TLR2-dependent movement of MYD88 to endosomes following ligand engagement. Involved in IL-18 signaling and is proposed to function as a sorting adapter for MYD88 in IL-18 signaling during adaptive immune response. Forms a complex with RAB11FIP2 that is recruited to the phagosomes to promote the activation of the actin-regulatory GTPases RAC1 and CDC42 and subsequent phagocytosis of Gram-negative bacteria. The sequence is that of TIR domain-containing adapter molecule 2 (Ticam2) from Mus musculus (Mouse).